Reading from the N-terminus, the 336-residue chain is tRNA N6-adenosine threonylcarbamoyltransferase (336 aa).

The Fe cation site is built by His111 and His115. Residues 134-138 (LVSGG), Asp167, Gly180, and Asn270 each bind substrate. Asp298 contacts Fe cation.

This sequence belongs to the KAE1 / TsaD family. Requires Fe(2+) as cofactor.

Its subcellular location is the cytoplasm. The catalysed reaction is L-threonylcarbamoyladenylate + adenosine(37) in tRNA = N(6)-L-threonylcarbamoyladenosine(37) in tRNA + AMP + H(+). Its function is as follows. Required for the formation of a threonylcarbamoyl group on adenosine at position 37 (t(6)A37) in tRNAs that read codons beginning with adenine. Is involved in the transfer of the threonylcarbamoyl moiety of threonylcarbamoyl-AMP (TC-AMP) to the N6 group of A37, together with TsaE and TsaB. TsaD likely plays a direct catalytic role in this reaction. This is tRNA N6-adenosine threonylcarbamoyltransferase from Acinetobacter baumannii (strain SDF).